The chain runs to 209 residues: Putative 3-methyladenine DNA glycosylase (209 aa).

The tract at residues Tyr189–Ser209 is disordered. Positions Pro199–Ser209 are enriched in basic residues.

It belongs to the DNA glycosylase MPG family.

This chain is Putative 3-methyladenine DNA glycosylase, found in Chlorobaculum tepidum (strain ATCC 49652 / DSM 12025 / NBRC 103806 / TLS) (Chlorobium tepidum).